The primary structure comprises 857 residues: Protein translocase subunit SecA (857 aa).

ATP contacts are provided by residues Gln88, 106–110 (GEGKT), and Asp496. 4 residues coordinate Zn(2+): Cys833, Cys835, Cys844, and Cys845.

Belongs to the SecA family. Monomer and homodimer. Part of the essential Sec protein translocation apparatus which comprises SecA, SecYEG and auxiliary proteins SecDF-YajC and YidC. It depends on Zn(2+) as a cofactor.

It localises to the cell inner membrane. Its subcellular location is the cytoplasm. It carries out the reaction ATP + H2O + cellular proteinSide 1 = ADP + phosphate + cellular proteinSide 2.. Part of the Sec protein translocase complex. Interacts with the SecYEG preprotein conducting channel. Has a central role in coupling the hydrolysis of ATP to the transfer of proteins into and across the cell membrane, serving as an ATP-driven molecular motor driving the stepwise translocation of polypeptide chains across the membrane. The sequence is that of Protein translocase subunit SecA from Sulfurimonas denitrificans (strain ATCC 33889 / DSM 1251) (Thiomicrospira denitrificans (strain ATCC 33889 / DSM 1251)).